Reading from the N-terminus, the 297-residue chain is Formamidopyrimidine-DNA glycosylase (297 aa).

Pro-2 serves as the catalytic Schiff-base intermediate with DNA. Residue Glu-3 is the Proton donor of the active site. Residue Lys-58 is the Proton donor; for beta-elimination activity of the active site. DNA-binding residues include His-106, Arg-125, and Arg-168. Residues 259-295 (RVYDREGLACTARGCRGRVRRIVQAGRSTFYCETCQP) form an FPG-type zinc finger. Residue Arg-285 is the Proton donor; for delta-elimination activity of the active site.

The protein belongs to the FPG family. Monomer. Zn(2+) serves as cofactor.

The catalysed reaction is Hydrolysis of DNA containing ring-opened 7-methylguanine residues, releasing 2,6-diamino-4-hydroxy-5-(N-methyl)formamidopyrimidine.. It catalyses the reaction 2'-deoxyribonucleotide-(2'-deoxyribose 5'-phosphate)-2'-deoxyribonucleotide-DNA = a 3'-end 2'-deoxyribonucleotide-(2,3-dehydro-2,3-deoxyribose 5'-phosphate)-DNA + a 5'-end 5'-phospho-2'-deoxyribonucleoside-DNA + H(+). Functionally, involved in base excision repair of DNA damaged by oxidation or by mutagenic agents. Acts as a DNA glycosylase that recognizes and removes damaged bases. Has a preference for oxidized purines, such as 7,8-dihydro-8-oxoguanine (8-oxoG). Has AP (apurinic/apyrimidinic) lyase activity and introduces nicks in the DNA strand. Cleaves the DNA backbone by beta-delta elimination to generate a single-strand break at the site of the removed base with both 3'- and 5'-phosphates. In Methylobacterium sp. (strain 4-46), this protein is Formamidopyrimidine-DNA glycosylase.